We begin with the raw amino-acid sequence, 353 residues long: Phosphoribosylformylglycinamidine cyclo-ligase (353 aa).

Belongs to the AIR synthase family.

The protein localises to the cytoplasm. The enzyme catalyses 2-formamido-N(1)-(5-O-phospho-beta-D-ribosyl)acetamidine + ATP = 5-amino-1-(5-phospho-beta-D-ribosyl)imidazole + ADP + phosphate + H(+). It participates in purine metabolism; IMP biosynthesis via de novo pathway; 5-amino-1-(5-phospho-D-ribosyl)imidazole from N(2)-formyl-N(1)-(5-phospho-D-ribosyl)glycinamide: step 2/2. This Methylocella silvestris (strain DSM 15510 / CIP 108128 / LMG 27833 / NCIMB 13906 / BL2) protein is Phosphoribosylformylglycinamidine cyclo-ligase.